Here is a 495-residue protein sequence, read N- to C-terminus: Tripartite motif-containing protein 5 (495 aa).

Alanine 2 carries the post-translational modification N-acetylalanine. An RING-type zinc finger spans residues 15-60 (CPICLELLTEPLSLHCGHSFCQACITANHKKSMLYKEGERSCPVCR). A Phosphoserine modification is found at serine 87. A B box-type zinc finger spans residues 92–133 (QKVDHCARHGEKLLLFCQEDSKVICWLCERSQEHRGHHTFLM). Residues cysteine 97, histidine 100, cysteine 119, and histidine 125 each coordinate Zn(2+). Residues 137–223 (AQEYHVKLQT…KSLTKSETKM (87 aa)) adopt a coiled-coil conformation. The segment at 187 to 200 (FEQLREILDREESN) is required for interaction with GABARAP and for autophagy. The region spanning 283 to 495 (LKGMLDMFRE…VPMTLCSPSS (213 aa)) is the B30.2/SPRY domain.

Belongs to the TRIM/RBCC family. As to quaternary structure, can form homodimers and homotrimers. In addition to lower-order dimerization, also exhibits a higher-order multimerization and both low- and high-order multimerizations are essential for its restriction activity. Interacts with BTBD1 and BTBD2. Interacts with PSMC4, PSMC5, PSMD7 and HSPA8/HSC70. Interacts (via B30.2/SPRY domain) with HSPA1A/B. Interacts with PSMC2, MAP3K7/TAK1, TAB2 and TAB3. Interacts with SQSTM1. Interacts with TRIM6 and TRIM34. Interacts with ULK1 (phosphorylated form), GABARAP, GABARAPL1, GABARAPL2, MAP1LC3A, MAP1LC3C and BECN1. In terms of processing, degraded in a proteasome-independent fashion in the absence of viral infection but in a proteasome-dependent fashion following exposure to restriction sensitive virus. Autoubiquitinated in a RING finger- and UBE2D2-dependent manner. Monoubiquitinated by TRIM21. Deubiquitinated by Yersinia YopJ. Ubiquitination may not lead to proteasomal degradation.

Its subcellular location is the cytoplasm. It is found in the nucleus. The catalysed reaction is S-ubiquitinyl-[E2 ubiquitin-conjugating enzyme]-L-cysteine + [acceptor protein]-L-lysine = [E2 ubiquitin-conjugating enzyme]-L-cysteine + N(6)-ubiquitinyl-[acceptor protein]-L-lysine.. Its pathway is protein modification; protein ubiquitination. In terms of biological role, capsid-specific restriction factor that prevents infection from non-host-adapted retroviruses. Blocks viral replication early in the life cycle, after viral entry but before reverse transcription. In addition to acting as a capsid-specific restriction factor, also acts as a pattern recognition receptor that activates innate immune signaling in response to the retroviral capsid lattice. Binding to the viral capsid triggers its E3 ubiquitin ligase activity, and in concert with the heterodimeric ubiquitin conjugating enzyme complex UBE2V1-UBE2N (also known as UBC13-UEV1A complex) generates 'Lys-63'-linked polyubiquitin chains, which in turn are catalysts in the autophosphorylation of the MAP3K7/TAK1 complex (includes TAK1, TAB2, and TAB3). Activation of the MAP3K7/TAK1 complex by autophosphorylation results in the induction and expression of NF-kappa-B and MAPK-responsive inflammatory genes, thereby leading to an innate immune response in the infected cell. Plays a role in regulating autophagy through activation of autophagy regulator BECN1 by causing its dissociation from its inhibitors BCL2 and TAB2. The protein is Tripartite motif-containing protein 5 (TRIM5) of Macaca nemestrina (Pig-tailed macaque).